Reading from the N-terminus, the 125-residue chain is Small ribosomal subunit protein uS13 (125 aa).

Residues 95-125 (GLPLRGQRTKTNARTRKGKRKTVANKKIASK) form a disordered region.

The protein belongs to the universal ribosomal protein uS13 family. Part of the 30S ribosomal subunit. Forms a loose heterodimer with protein S19. Forms two bridges to the 50S subunit in the 70S ribosome.

Functionally, located at the top of the head of the 30S subunit, it contacts several helices of the 16S rRNA. In the 70S ribosome it contacts the 23S rRNA (bridge B1a) and protein L5 of the 50S subunit (bridge B1b), connecting the 2 subunits; these bridges are implicated in subunit movement. Contacts the tRNAs in the A and P-sites. This is Small ribosomal subunit protein uS13 from Borreliella burgdorferi (strain ATCC 35210 / DSM 4680 / CIP 102532 / B31) (Borrelia burgdorferi).